A 260-amino-acid polypeptide reads, in one-letter code: tRNA pseudouridine synthase A (260 aa).

Asp60 functions as the Nucleophile in the catalytic mechanism. Tyr118 is a substrate binding site.

This sequence belongs to the tRNA pseudouridine synthase TruA family. As to quaternary structure, homodimer.

It carries out the reaction uridine(38/39/40) in tRNA = pseudouridine(38/39/40) in tRNA. Formation of pseudouridine at positions 38, 39 and 40 in the anticodon stem and loop of transfer RNAs. This is tRNA pseudouridine synthase A from Leuconostoc citreum (strain KM20).